The sequence spans 367 residues: Adenosine deaminase (367 aa).

H46 and H48 together coordinate Zn(2+). Residues 48-50, D176, and G205 each bind a purine D-ribonucleoside; that span reads HLD. Positions 174 to 188 are gating helix loop; regulates binding affinity for substrates and thus substrate selectivity; that stretch reads TGDGGLSHERMKEAA. H230 is a binding site for Zn(2+). Residues E233, H257, and D314 each coordinate a purine D-ribonucleoside. A Zn(2+)-binding site is contributed by D314.

It belongs to the metallo-dependent hydrolases superfamily. Adenosine and AMP deaminases family. Zn(2+) serves as cofactor.

The enzyme catalyses adenosine + H2O + H(+) = inosine + NH4(+). The catalysed reaction is S-methyl-5'-thioadenosine + H2O + H(+) = S-methyl-5'-thioinosine + NH4(+). Its pathway is purine metabolism; purine nucleoside salvage. With respect to regulation, inhibited by coformycin and methylthiocoformycin (MT-coformycin). In terms of biological role, catalyzes the hydrolytic deamination of adenosine to produce inosine. Unlike mammalian adenosine deaminases, also catalyzes the deamination of 5'-methylthioadenosine (MTA), a by-product of polyamine biosynthesis, to produce 5'-methylthioinosine (MTI). Plays an essential role in the purine salvage pathway which allows the parasite to use host cell purines for the synthesis of nucleic acids. This is Adenosine deaminase from Plasmodium falciparum (isolate 3D7).